The chain runs to 135 residues: Photosystem II extrinsic protein U (135 aa).

The first 29 residues, 1–29, serve as a signal peptide directing secretion; the sequence is MKRLLSWLTGALLMAGLLAGLILPGSVHA.

This sequence belongs to the PsbU family. As to quaternary structure, PSII is composed of 1 copy each of membrane proteins PsbA, PsbB, PsbC, PsbD, PsbE, PsbF, PsbH, PsbI, PsbJ, PsbK, PsbL, PsbM, PsbT, PsbX, PsbY, Psb30/Ycf12, peripheral proteins PsbO, CyanoQ (PsbQ), PsbU, PsbV and a large number of cofactors. It forms dimeric complexes.

It is found in the cellular thylakoid membrane. Functionally, one of the extrinsic, lumenal subunits of photosystem II (PSII). PSII is a light-driven water plastoquinone oxidoreductase, using light energy to abstract electrons from H(2)O, generating a proton gradient subsequently used for ATP formation. The extrinsic proteins stabilize the structure of photosystem II oxygen-evolving complex (OEC), the ion environment of oxygen evolution and protect the OEC against heat-induced inactivation. In Parasynechococcus marenigrum (strain WH8102), this protein is Photosystem II extrinsic protein U.